The sequence spans 417 residues: Probable metalloprotease arx1 (417 aa).

Belongs to the peptidase M24 family. As to quaternary structure, component of the nucleoplasmic and cytoplasmic pre-60S ribosomal particles.

The protein resides in the cytoplasm. It is found in the nucleus. Its function is as follows. Probable metalloprotease involved in proper assembly of pre-ribosomal particles during the biogenesis of the 60S ribosomal subunit. Accompanies the pre-60S particles to the cytoplasm. In Schizosaccharomyces pombe (strain 972 / ATCC 24843) (Fission yeast), this protein is Probable metalloprotease arx1 (arx1).